A 625-amino-acid polypeptide reads, in one-letter code: RecQ-mediated genome instability protein 1 (625 aa).

M1 is modified (N-acetylmethionine). S225 bears the Phosphoserine mark. The tract at residues 257 to 282 (LTANNDTSSERCFTTGSSSNTIPTRQ) is disordered. Phosphoserine is present on residues S284 and S292. Glycyl lysine isopeptide (Lys-Gly) (interchain with G-Cter in SUMO2) cross-links involve residues K334, K387, and K426.

This sequence belongs to the RMI1 family. In terms of assembly, component of the RMI complex, containing at least TOP3A, RMI1 and RMI2. The RMI complex interacts with BLM. Directly interacts with RMI2 and TOP3A. May bind DHJ. Interacts (via N-terminal region) with BLM; the interaction is direct.

It localises to the nucleus. Its function is as follows. Essential component of the RMI complex, a complex that plays an important role in the processing of homologous recombination intermediates to limit DNA crossover formation in cells. Promotes TOP3A binding to double Holliday junctions (DHJ) and hence stimulates TOP3A-mediated dissolution. Required for BLM phosphorylation during mitosis. Within the BLM complex, required for BLM and TOP3A stability. In Homo sapiens (Human), this protein is RecQ-mediated genome instability protein 1 (RMI1).